The following is a 156-amino-acid chain: Ribosomal RNA large subunit methyltransferase H (156 aa).

S-adenosyl-L-methionine contacts are provided by residues Leu-73, Gly-104, and 123–128 (LSDLTL).

This sequence belongs to the RNA methyltransferase RlmH family. Homodimer.

It localises to the cytoplasm. The enzyme catalyses pseudouridine(1915) in 23S rRNA + S-adenosyl-L-methionine = N(3)-methylpseudouridine(1915) in 23S rRNA + S-adenosyl-L-homocysteine + H(+). Functionally, specifically methylates the pseudouridine at position 1915 (m3Psi1915) in 23S rRNA. This Leptothrix cholodnii (strain ATCC 51168 / LMG 8142 / SP-6) (Leptothrix discophora (strain SP-6)) protein is Ribosomal RNA large subunit methyltransferase H.